The primary structure comprises 345 residues: Platelet-derived growth factor C (345 aa).

A signal peptide spans 1-22; the sequence is MLLLGLLLLTSALAGQRTGTRA. Residues 24–33 are compositionally biased toward polar residues; sequence SNLSSKLQLS. A disordered region spans residues 24 to 45; sequence SNLSSKLQLSSDKEQNGVQDPR. Asn-25 carries N-linked (GlcNAc...) asparagine glycosylation. Over residues 34–45 the composition is skewed to basic and acidic residues; sequence SDKEQNGVQDPR. One can recognise a CUB domain in the interval 46 to 163; it reads HERVVTISGN…PGFCIHYSII (118 aa). The N-linked (GlcNAc...) asparagine glycan is linked to Asn-55. Cystine bridges form between Cys-104-Cys-124, Cys-250-Cys-294, Cys-280-Cys-335, and Cys-287-Cys-337.

It belongs to the PDGF/VEGF growth factor family. Homodimer; disulfide-linked. Interacts with PDGFRA homodimers, and with heterodimers formed by PDGFRA and PDGFRB. Interacts (via CUB domain) with PLAT (via kringle domain). In terms of processing, proteolytic removal of the N-terminal CUB domain releasing the core domain is necessary for unmasking the receptor-binding epitopes of the core domain. Cleavage after basic residues in the hinge region (region connecting the CUB and growth factor domains) gives rise to the receptor-binding form. Cleaved by PLAT and PLG. Sumoylated by SUMO1. Post-translationally, N-glycosylated. As to expression, mainly expressed in kidney, testis, liver, heart and brain (at protein level). Highly expressed in airway epithelium, interstitial cells and alveolar macrophages in the lung of mice overexpressing IL13. Expressed in the ovaries.

It localises to the cytoplasm. It is found in the cytosol. The protein resides in the secreted. The protein localises to the nucleus. Its subcellular location is the cytoplasmic granule. It localises to the cell membrane. Growth factor that plays an essential role in the regulation of embryonic development, cell proliferation, cell migration, survival and chemotaxis. Potent mitogen and chemoattractant for cells of mesenchymal origin. Required for normal skeleton formation during embryonic development, especially for normal development of the craniofacial skeleton and for normal development of the palate. Required for normal skin morphogenesis during embryonic development. Plays an important role in wound healing, where it appears to be involved in three stages: inflammation, proliferation and remodeling. Plays an important role in angiogenesis and blood vessel development. Involved in fibrotic processes, in which transformation of interstitial fibroblasts into myofibroblasts plus collagen deposition occurs. The CUB domain has mitogenic activity in coronary artery smooth muscle cells, suggesting a role beyond the maintenance of the latency of the PDGF domain. In the nucleus, PDGFC seems to have additional function. The sequence is that of Platelet-derived growth factor C (Pdgfc) from Mus musculus (Mouse).